The chain runs to 373 residues: LIM domain-binding protein 2 (373 aa).

Disordered regions lie at residues 244–291 and 327–373; these read APPA…ANLS and QYDA…QASQ. The span at 263–280 shows a compositional bias: low complexity; the sequence is STSSTSNSSAGNNANSTG. In terms of domain architecture, LIM interaction domain (LID) spans 298-337; that stretch reads DVMVVGEPTLMGGEFGDEDERLITRLENTQYDAANGMDDE. Polar residues predominate over residues 341 to 361; it reads NNSPALGNNSPWNSKPPATQE.

The protein belongs to the LDB family. As to quaternary structure, interacts with LHX9. Interacts with SLK; leading to negatively regulate SLK kinase activity. Interacts with LMO4. Ubiquitinated by RLIM/RNF12, leading to its degradation by the proteasome.

The protein resides in the nucleus. Functionally, transcription cofactor. Binds to the LIM domain of a wide variety of LIM domain-containing transcription factors. This is LIM domain-binding protein 2 (LDB2) from Homo sapiens (Human).